The primary structure comprises 535 residues: T-box transcription factor TBX21 (535 aa).

The disordered stretch occupies residues 1–62 (MGIVEPGCGD…SLGSPYPGGA (62 aa)). Serine 53 is modified (phosphoserine). Tyrosine 77 is modified (phosphotyrosine). The disordered stretch occupies residues 83–109 (AAGFPGAGESFPPPADAEGYQPGEGYA). Phosphotyrosine is present on tyrosine 118. The T-box DNA-binding region spans 141–326 (LNNHLLWSKF…NNPFAKGFRE (186 aa)). Tyrosine 220 carries the post-translational modification Phosphotyrosine; by ABL1. At serine 225 the chain carries Phosphoserine. Tyrosine 266 bears the Phosphotyrosine; by ABL1 mark. Phosphothreonine is present on threonine 303. At tyrosine 305 the chain carries Phosphotyrosine; by ABL1. A Glycyl lysine isopeptide (Lys-Gly) (interchain with G-Cter in ubiquitin) cross-link involves residue lysine 314. Positions 449-535 (RPMRTLPMEP…EGQFYNYFPN (87 aa)) are disordered. Positions 503–520 (SPYPSSGDSSSPAGAPSP) are enriched in low complexity. Residue serine 513 is modified to Phosphoserine. Residue tyrosine 530 is modified to Phosphotyrosine; by ITK.

As to quaternary structure, interacts with RUNX1, RUNX3, ITK, ABL1, RELA, CDK9 and KDM6B. The phosphorylated form (at Thr-303) interacts with NFATC2. Interacts with SMARCA4 in a KDM6B-dependent manner. Interacts with CCTN1. Interacts with USP10. The phosphorylated form (at Tyr-530) interacts with GATA3. In terms of processing, phosphorylations at Ser-53, Tyr-77, Ser-225 and Ser-513 are regulated by mTORC1. Phosphorylation at Tyr-530 is essential for its interaction GATA3. Phosphorylation at Tyr-220, Tyr-266 and Tyr-305 enhances its transcriptional activator activity. Phosphorylation at Thr-303 is required for its interaction with NFATC2. Ubiquitinated at Lys-314, leading to its degradation by the proteasome. Ubiquitination is essential for controlling protein stability, binding to the T-box-binding element of the IFN-gamma promoter, and for interaction with NFATC2 through induction of phosphorylation at Thr-303. Deubiquitinated by USP10 leading to its stabilization. T-cell specific.

It is found in the nucleus. Lineage-defining transcription factor which initiates Th1 lineage development from naive Th precursor cells both by activating Th1 genetic programs and by repressing the opposing Th2 and Th17 genetic programs. Activates transcription of a set of genes important for Th1 cell function, including those encoding IFN-gamma and the chemokine receptor CXCR3. Induces permissive chromatin accessibilty and CpG methylation in IFNG. Activates IFNG and CXCR3 genes in part by recruiting chromatin remodeling complexes including KDM6B, a SMARCA4-containing SWI/SNF-complex, and an H3K4me2-methyltransferase complex to their promoters and all of these complexes serve to establish a more permissive chromatin state conducive with transcriptional activation. Can activate Th1 genes also via recruitment of Mediator complex and P-TEFb (composed of CDK9 and CCNT1/cyclin-T1) in the form of the super elongation complex (SEC) to super-enhancers and associated genes in activated Th1 cells. Inhibits the Th17 cell lineage commitment by blocking RUNX1-mediated transactivation of Th17 cell-specific transcriptinal regulator RORC. Inhibits the Th2 cell lineage commitment by suppressing the production of Th2 cytokines, such as IL-4, IL-5, and IL- 13, via repression of transcriptional regulators GATA3 and NFATC2. Protects Th1 cells from amplifying aberrant type-I IFN response in an IFN-gamma abundant microenvironment by acting as a repressor of type-I IFN transcription factors and type-I IFN-stimulated genes. Acts as a regulator of antiviral B-cell responses; controls chronic viral infection by promoting the antiviral antibody IgG2a isotype switching and via regulation of a broad antiviral gene expression program. Required for the correct development of natural killer (NK) and mucosal-associated invariant T (MAIT) cells. This Homo sapiens (Human) protein is T-box transcription factor TBX21 (TBX21).